A 281-amino-acid polypeptide reads, in one-letter code: Ribosomal protein L11 methyltransferase (281 aa).

Threonine 133, glycine 154, aspartate 175, and asparagine 216 together coordinate S-adenosyl-L-methionine.

This sequence belongs to the methyltransferase superfamily. PrmA family.

Its subcellular location is the cytoplasm. It catalyses the reaction L-lysyl-[protein] + 3 S-adenosyl-L-methionine = N(6),N(6),N(6)-trimethyl-L-lysyl-[protein] + 3 S-adenosyl-L-homocysteine + 3 H(+). Methylates ribosomal protein L11. The polypeptide is Ribosomal protein L11 methyltransferase (Campylobacter jejuni subsp. jejuni serotype O:6 (strain 81116 / NCTC 11828)).